Reading from the N-terminus, the 695-residue chain is Pentatricopeptide repeat-containing protein 1, mitochondrial (695 aa).

PPR repeat units follow at residues 133–169, 170–204, 205–243, 244–278, 279–315, and 316–352; these read TQYW…RLQP, LECN…DLEP, SDAT…NFQL, NLKT…GHAV, TEET…GIKP, and SRHG…TILL. Positions 391-416 are disordered; that stretch reads QKLEGPPALPEARVTSRTQPEVETTA. 4 PPR repeats span residues 470-485, 517-551, 552-583, and 584-618; these read EGFL…QPDI, DVTF…GIVP, NLRT…QVSP, and NIHI…SVPV. A disordered region spans residues 672–695; that stretch reads WQEFQNKPVGDQDTTDKAGGLRDG. Residues 685-695 show a composition bias toward basic and acidic residues; the sequence is TTDKAGGLRDG.

It belongs to the PTCD1 family. Associates with mitochondrial leucine tRNAs. Interacts with ELAC2.

The protein localises to the mitochondrion. The protein resides in the mitochondrion matrix. Mitochondrial protein implicated in negative regulation of leucine tRNA levels, as well as negative regulation of mitochondria-encoded proteins and COX activity. Also affects the 3'-processing of mitochondrial tRNAs. The chain is Pentatricopeptide repeat-containing protein 1, mitochondrial (Ptcd1) from Mus musculus (Mouse).